Consider the following 154-residue polypeptide: Crossover junction endodeoxyribonuclease RuvC (154 aa).

Active-site residues include D7, E67, and D139. Positions 7, 67, and 139 each coordinate Mg(2+).

Belongs to the RuvC family. Homodimer which binds Holliday junction (HJ) DNA. The HJ becomes 2-fold symmetrical on binding to RuvC with unstacked arms; it has a different conformation from HJ DNA in complex with RuvA. In the full resolvosome a probable DNA-RuvA(4)-RuvB(12)-RuvC(2) complex forms which resolves the HJ. Requires Mg(2+) as cofactor.

It is found in the cytoplasm. The enzyme catalyses Endonucleolytic cleavage at a junction such as a reciprocal single-stranded crossover between two homologous DNA duplexes (Holliday junction).. In terms of biological role, the RuvA-RuvB-RuvC complex processes Holliday junction (HJ) DNA during genetic recombination and DNA repair. Endonuclease that resolves HJ intermediates. Cleaves cruciform DNA by making single-stranded nicks across the HJ at symmetrical positions within the homologous arms, yielding a 5'-phosphate and a 3'-hydroxyl group; requires a central core of homology in the junction. The consensus cleavage sequence is 5'-(A/T)TT(C/G)-3'. Cleavage occurs on the 3'-side of the TT dinucleotide at the point of strand exchange. HJ branch migration catalyzed by RuvA-RuvB allows RuvC to scan DNA until it finds its consensus sequence, where it cleaves and resolves the cruciform DNA. The chain is Crossover junction endodeoxyribonuclease RuvC from Synechococcus sp. (strain WH7803).